The chain runs to 249 residues: Serine 3-dehydrogenase (249 aa).

6–30 lines the NADP(+) pocket; sequence LITGATSGFGQATARRFVKEGWKVI. Serine 135 is a substrate binding site. The active-site Proton acceptor is the tyrosine 148.

The protein belongs to the short-chain dehydrogenases/reductases (SDR) family. Homotetramer.

It catalyses the reaction L-serine + NADP(+) = aminoacetaldehyde + CO2 + NADPH. In terms of biological role, catalyzes the oxidation of the hydroxyl group of serine to form 2-aminomalonate semialdehyde which is spontaneously converted into 2-aminoacetaldehyde and CO(2). Also acts on D-serine, L-glycerate, D-glycerate and 2-methyl-DL-serine. Does not act on O-methyl-DL-serine and L-threonine. The polypeptide is Serine 3-dehydrogenase (sdh) (Agrobacterium fabrum (strain C58 / ATCC 33970) (Agrobacterium tumefaciens (strain C58))).